The sequence spans 426 residues: Glutamate-1-semialdehyde 2,1-aminomutase (426 aa).

At Lys265 the chain carries N6-(pyridoxal phosphate)lysine.

It belongs to the class-III pyridoxal-phosphate-dependent aminotransferase family. HemL subfamily. As to quaternary structure, homodimer. It depends on pyridoxal 5'-phosphate as a cofactor.

It is found in the cytoplasm. The enzyme catalyses (S)-4-amino-5-oxopentanoate = 5-aminolevulinate. It functions in the pathway porphyrin-containing compound metabolism; protoporphyrin-IX biosynthesis; 5-aminolevulinate from L-glutamyl-tRNA(Glu): step 2/2. The protein is Glutamate-1-semialdehyde 2,1-aminomutase of Salmonella paratyphi A (strain ATCC 9150 / SARB42).